A 76-amino-acid polypeptide reads, in one-letter code: Exodeoxyribonuclease 7 small subunit (76 aa).

It belongs to the XseB family. In terms of assembly, heterooligomer composed of large and small subunits.

It localises to the cytoplasm. It carries out the reaction Exonucleolytic cleavage in either 5'- to 3'- or 3'- to 5'-direction to yield nucleoside 5'-phosphates.. Functionally, bidirectionally degrades single-stranded DNA into large acid-insoluble oligonucleotides, which are then degraded further into small acid-soluble oligonucleotides. In Geobacter metallireducens (strain ATCC 53774 / DSM 7210 / GS-15), this protein is Exodeoxyribonuclease 7 small subunit.